Consider the following 245-residue polypeptide: 1-(5-phosphoribosyl)-5-[(5-phosphoribosylamino)methylideneamino] imidazole-4-carboxamide isomerase (245 aa).

D7 acts as the Proton acceptor in catalysis. Residue D129 is the Proton donor of the active site.

Belongs to the HisA/HisF family.

Its subcellular location is the cytoplasm. The catalysed reaction is 1-(5-phospho-beta-D-ribosyl)-5-[(5-phospho-beta-D-ribosylamino)methylideneamino]imidazole-4-carboxamide = 5-[(5-phospho-1-deoxy-D-ribulos-1-ylimino)methylamino]-1-(5-phospho-beta-D-ribosyl)imidazole-4-carboxamide. It functions in the pathway amino-acid biosynthesis; L-histidine biosynthesis; L-histidine from 5-phospho-alpha-D-ribose 1-diphosphate: step 4/9. This Enterobacter sp. (strain 638) protein is 1-(5-phosphoribosyl)-5-[(5-phosphoribosylamino)methylideneamino] imidazole-4-carboxamide isomerase.